Consider the following 201-residue polypeptide: Putative ankyrin repeat protein R868 (201 aa).

ANK repeat units follow at residues 125–154 (YENN…NCYF) and 156–188 (KAKK…DYNF).

In Acanthamoeba polyphaga (Amoeba), this protein is Putative ankyrin repeat protein R868.